A 225-amino-acid polypeptide reads, in one-letter code: Non-structural protein V (225 aa).

Residues 145–157 show a composition bias toward polar residues; the sequence is SGPSLTDQASSKD. The interval 145–172 is disordered; sequence SGPSLTDQASSKDPNFKRGGEIDGRHKG. Basic and acidic residues predominate over residues 158–169; it reads PNFKRGGEIDGR. His-174, Cys-193, Cys-197, Cys-209, Cys-211, Cys-214, Cys-218, and Cys-221 together coordinate Zn(2+).

Belongs to the paramyxoviruses V protein family.

The protein resides in the host cytoplasm. Plays an essential role in the inhibition of host immune response. Prevents the establishment of cellular antiviral state by blocking interferon-alpha/beta (IFN-alpha/beta) production and signaling pathway. Interacts with host IFIH1/MDA5 and DHX58/LGP2 to inhibit the transduction pathway involved in the activation of IFN-beta promoter, thus protecting the virus against cell antiviral state. Efficiently blocks type I and type II IFN signaling following infection, probably by targeting host STAT1 for proteasomal degradation. The sequence is that of Non-structural protein V (P/V) from Simian virus 41 (SV41).